A 211-amino-acid chain; its full sequence is MTSQRTRERLIQRLCEEGIANQRVLDVIRKTPRHLFVDEALAHRAYEDTALPIGHNQTISQPYMVARMSELLLAAGPLDKVMEIGTGSGYQTAVLSQLVERVFSVERIKGLQDRAKERLVELNLRNVVFRWGDGWEGWPALAPYNGIIVTAVATDVPQALLDQLAPGGRLVIPVGAGEVQQLMLIIREENGFSRHVLGAVRFVPLLNGPIA.

Ser-60 is an active-site residue.

Belongs to the methyltransferase superfamily. L-isoaspartyl/D-aspartyl protein methyltransferase family.

It is found in the cytoplasm. It catalyses the reaction [protein]-L-isoaspartate + S-adenosyl-L-methionine = [protein]-L-isoaspartate alpha-methyl ester + S-adenosyl-L-homocysteine. Catalyzes the methyl esterification of L-isoaspartyl residues in peptides and proteins that result from spontaneous decomposition of normal L-aspartyl and L-asparaginyl residues. It plays a role in the repair and/or degradation of damaged proteins. This Pseudomonas syringae pv. tomato (strain ATCC BAA-871 / DC3000) protein is Protein-L-isoaspartate O-methyltransferase.